We begin with the raw amino-acid sequence, 465 residues long: Presenilin spe-4 (465 aa).

At 1–18 (MDTLRSISSELVRSSQLR) the chain is on the cytoplasmic side. Residues 19–39 (WTLFSVIANMSLTLSIWIGVY) traverse the membrane as a helical segment. Over 40–71 (NMEVNSELSKTYFLDPSFEQTTGNLLLDGFIN) the chain is Lumenal. Residues 72 to 92 (GVGTILVLGCVSFIMLAFVLF) traverse the membrane as a helical segment. Residues 93 to 96 (DFRR) are Cytoplasmic-facing. The chain crosses the membrane as a helical span at residues 97 to 117 (IVKAWLTLSCLLILFGVSAQT). Residues 118–136 (LHDMFSQVFDQDDNNQYYM) lie on the Lumenal side of the membrane. Residues 137–157 (TIVLIVVPTVVYGFGGIYAFF) form a helical membrane-spanning segment. The Cytoplasmic portion of the chain corresponds to 158 to 160 (SNS). A helical membrane pass occupies residues 161–181 (SLILHQIFVVTNCSLISVFYL). The Lumenal portion of the chain corresponds to 182-190 (RVFPSKTTW). The helical transmembrane segment at 191-211 (FVLWIVLFWDLFAVLAPMGPL) threads the bilayer. The active site involves D200. Residues 212-389 (KKVQEKASDY…DALNDGEVLR (178 aa)) lie on the Cytoplasmic side of the membrane. The interval 287–356 (INPDSVPTEH…SDISTAEECD (70 aa)) is disordered. Positions 326–350 (SETSSGSSNLSSSDSSTTVSTSDIS) are enriched in low complexity. The chain crosses the membrane as a helical span at residues 390–410 (LGFGDFVFYSLLIGQAAASGC). Residue D394 is part of the active site. A topological domain (lumenal) is located at residue P411. The chain crosses the membrane as a helical span at residues 412-432 (FAVISAALGILFGLVVTLTVF). Over 433–439 (STEESTT) the chain is Cytoplasmic. A PAL motif is present at residues 440–442 (PAL). The segment at residues 440 to 460 (PALPLPVICGTFCYFSSMFFW) is an intramembrane region (helical). Topologically, residues 461-465 (EQLYG) are cytoplasmic.

It belongs to the peptidase A22A family. As to quaternary structure, homodimer. Potential component of the gamma-secretase complex, a complex probably composed of the presenilin homodimer (sel-12, hop-1 or spe-4), nicastrin (aph-2), aph-1 and pen-2.

It localises to the endoplasmic reticulum membrane. Its subcellular location is the golgi apparatus. It is found in the cis-Golgi network membrane. Potential catalytic subunit of the gamma-secretase complex during spermatogenesis, an endoprotease complex that catalyzes the intramembrane cleavage of integral membrane proteins such as Notch receptors (lin-12 or glp-1). Involved in spermatid formation during meiosis II. May be required for proper localization of macromolecules that are subject to asymmetric partitioning during spermatogenesis. The chain is Presenilin spe-4 from Caenorhabditis elegans.